The primary structure comprises 471 residues: Putative ABC transporter ATP-binding protein STK_11360 (471 aa).

ABC transporter domains follow at residues 4–241 (LEIK…LEPL) and 255–470 (VILE…VIKD). ATP is bound by residues 37-44 (GKSGSGKS) and 286-293 (GDNGSGKS).

It belongs to the ABC transporter superfamily.

The protein localises to the cell membrane. Functionally, probably part of an ABC transporter complex. Responsible for energy coupling to the transport system. The polypeptide is Putative ABC transporter ATP-binding protein STK_11360 (Sulfurisphaera tokodaii (strain DSM 16993 / JCM 10545 / NBRC 100140 / 7) (Sulfolobus tokodaii)).